Here is a 506-residue protein sequence, read N- to C-terminus: Aldehyde dehydrogenase [NAD(P)+] 1 (506 aa).

The active-site Proton acceptor is glutamate 268. The active-site Nucleophile is the cysteine 302.

Belongs to the aldehyde dehydrogenase family.

The protein resides in the cytoplasm. The catalysed reaction is an aldehyde + NAD(+) + H2O = a carboxylate + NADH + 2 H(+). The enzyme catalyses 3-aminopropanal + NAD(+) + H2O = beta-alanine + NADH + 2 H(+). Its function is as follows. Cytoplasmic aldehyde dehydrogenase involved in ethanol oxidation. Required for pantothenic acid production through the conversion of 3-aminopropanal to beta-alanine, an intermediate in pantothenic acid (vitamin B5) and coenzyme A (CoA) biosynthesis. The chain is Aldehyde dehydrogenase [NAD(P)+] 1 (ALD2) from Saccharomyces cerevisiae (strain ATCC 204508 / S288c) (Baker's yeast).